Here is a 193-residue protein sequence, read N- to C-terminus: Ribosomal RNA large subunit methyltransferase E (193 aa).

S-adenosyl-L-methionine is bound by residues glycine 48, phenylalanine 50, aspartate 67, asparagine 85, and aspartate 107. Lysine 147 (proton acceptor) is an active-site residue.

It belongs to the class I-like SAM-binding methyltransferase superfamily. RNA methyltransferase RlmE family.

The protein resides in the cytoplasm. It carries out the reaction uridine(2552) in 23S rRNA + S-adenosyl-L-methionine = 2'-O-methyluridine(2552) in 23S rRNA + S-adenosyl-L-homocysteine + H(+). Functionally, specifically methylates the uridine in position 2552 of 23S rRNA at the 2'-O position of the ribose in the fully assembled 50S ribosomal subunit. This Borrelia duttonii (strain Ly) protein is Ribosomal RNA large subunit methyltransferase E.